The chain runs to 260 residues: Granzyme A (260 aa).

The first 26 residues, 1–26 (MRNASGPRGPSLATLLFLLLIPEGGC), serve as a signal peptide directing secretion. The propeptide at 27–28 (ER) is activation peptide. Residues 29 to 257 (IIGGDTVVPH…HLNWIKKIMK (229 aa)) form the Peptidase S1 domain. Cysteine 54 and cysteine 70 are joined by a disulfide. Residues histidine 69 and aspartate 113 each act as charge relay system in the active site. Intrachain disulfides connect cysteine 147/cysteine 217, cysteine 178/cysteine 196, and cysteine 207/cysteine 232. Residues asparagine 157 and asparagine 169 are each glycosylated (N-linked (GlcNAc...) asparagine). Serine 211 acts as the Charge relay system in catalysis.

The protein belongs to the peptidase S1 family. Granzyme subfamily. As to quaternary structure, homodimer; disulfide-linked. Interacts with APEX1. In terms of tissue distribution, found in cytotoxic lymphocytes and in normal lymphoid tissues such as thymus and spleen. More abundant in lymphoid tissues than isoform HF2.

The protein resides in the secreted. Its subcellular location is the cytoplasmic granule. It catalyses the reaction Hydrolysis of proteins, including fibronectin, type IV collagen and nucleolin. Preferential cleavage: -Arg-|-Xaa-, -Lys-|-Xaa- &gt;&gt; -Phe-|-Xaa- in small molecule substrates.. Its function is as follows. Abundant protease in the cytosolic granules of cytotoxic T-cells and NK-cells which activates caspase-independent pyroptosis when delivered into the target cell through the immunological synapse. It cleaves after Lys or Arg. Cleaves APEX1 after 'Lys-31' and destroys its oxidative repair activity. Cleaves the nucleosome assembly protein SET after 'Lys-189', which disrupts its nucleosome assembly activity and allows the SET complex to translocate into the nucleus to nick and degrade the DNA. The protein is Granzyme A (Gzma) of Mus musculus (Mouse).